The following is a 914-amino-acid chain: Chlorate reductase subunit alpha (914 aa).

Positions 1-32 (MNSPDEHNGRRRFLQFSAAALASAAASPSLWA) form a signal peptide, tat-type signal. The 64-residue stretch at 62–125 (DSVGVMTHSN…VYCSWSKQPD (64 aa)) folds into the 4Fe-4S Mo/W bis-MGD-type domain. His69, Cys73, Cys77, and Cys111 together coordinate [4Fe-4S] cluster. Asp205 lines the Mo-bis(molybdopterin guanine dinucleotide) pocket.

It belongs to the prokaryotic molybdopterin-containing oxidoreductase family. As to quaternary structure, heterotrimer of alpha, beta and gamma subunits. [4Fe-4S] cluster is required as a cofactor. It depends on Mo-bis(molybdopterin guanine dinucleotide) as a cofactor. In terms of processing, predicted to be exported by the Tat system. The position of the signal peptide cleavage has not been experimentally proven.

It is found in the periplasm. The enzyme catalyses chlorate + AH2 = chlorite + A + H2O. Functionally, terminal reductase that allows anaerobic growth on chlorate as the sole respiratory oxidant. The chain is Chlorate reductase subunit alpha (clrA) from Ideonella dechloratans.